The chain runs to 1483 residues: MIERGKFRSLTLINWNGFFARTFDLDELVTTLSGGNGAGKSTTMAAFITALIPDLTLLHFRNTTEAGATSGSRDKGLHGKLRPGVCYAALDVVNSLHQRVIVGVRLQQIAGRDRKVDIKPFSIHGLPTAINPTEILTESVSARHARVLPLSELKEKFEAMESVQFKQYNSITDYHSVMFDLGIVARRLRTAADRSKYYRLIEASLYGGISSAITRSLRDYLLPENGGVRKAFQDMEAALRENRMTLEAIRVTQSDRDLFKHLISEATNYVSADYMRHANERRIHLDAALLLRNELFTSRKQRASEQYRHIEMARELAEHNAAESDLETDYQGASDHLNLVQTALRQQEKIDRYDADLEELTFRLEEQNEVVAEAREVQEDNEARSEAAELEVDELKSQLADYQQALDVQQTRAIQYQQALQALQRAQDICQLRDLSVDNAEEWQETFQAKELEATDKLLMLEQKMSVAQAAHSQFEQAYELVTRIAGPVSRSDAWQVGRDVLRDAGNQRYHAEQLEPLRSRVSELGQRLREQQDAERLLSDFCKRYGQQVDAADLENLQAELEAQIELLNESVADAGERRMTLRQELEQLRERIARLTKQAPQWLAAQEILSQLGEQTGQALENSQQVTEFMQQLLERERETTVERDDIAARKREIERQIERLSQPGGSEDARLNHLAERFGGVLLSEIYDDVTIDDAPYFSALYGPARHAIVVPDLSLIREQLDGLDDCPEDLYLIEGDPQSFDDSVFNVEELAKAVVVKAGDRQWRYSRFPKVPLFGRAARENQLEVLRAERETLAERFATLSFDVQKIQRLHQSFSRFIGSHIGVAFEPDPEAALRQLNGRRNEVERELNNHESENQQQRQQYEQAKEGVSQLNRLLPRVSLLLDDTLQDRHEEIQERLAEAQEATRFVQQHGAQLARLEPILAVLQSDPEQHEQLTLDYQQAQQQQRDARQQAFALTEVVQRRAHFGYIDSAGMLNGTSDLNEKLRQRLEQAEAERARAREQLRQHQSQLTQYSQVLASLKSSFDAKRDMLKELQQEMQDIGVHADASAEQRARLRRDELYGALSNNRARRNQLEKQLTFCEAEMDALQKKLRRLERDYQQGREQVVSAKAGWVTVLRMVKDNGVERRLHRRELAYLGGDELRSMSDKALGALRLAVADNEHLRDVLRLSEDPKRPERKIQFYIAVYQHLRERIRQDIIRTDDPVEAIEQMEIELNRLTEELTAREQTLAISSRSVSNIIRKTIQREQNRIRQLNQGLQAVSFGQVKSVRLNVNVREAHSTLLDVLSEQHEQHQDLFKSNRLTFSEALAKLYQRLNPQIDMGQRTPQTIGEELLDYRNYLEMEVEVSRGSDGWLRAESGALSTGEAIGTGMSILVMVVQSWEEESRRLRGKDISPCRLLFLDEAARLDAKSIATLFELCDRLEMQLIIAAPENISPEKGTTYKLVRKVFNNTEHVHVVGLRGFSAEPGAATGSADVGAH.

G34–S41 contacts ATP. 2 coiled-coil regions span residues E311 to A426 and G547 to A607. Residues P666–R783 are flexible hinge. 2 coiled-coil regions span residues E835–A1115 and D1206–S1266. A disordered region spans residues R850–K870.

This sequence belongs to the SMC family. MukB subfamily. In terms of assembly, homodimerization via its hinge domain. Binds to DNA via its C-terminal region. Interacts, and probably forms a ternary complex, with MukE and MukF via its C-terminal region. The complex formation is stimulated by calcium or magnesium. Interacts with tubulin-related protein FtsZ.

It is found in the cytoplasm. Its subcellular location is the nucleoid. In terms of biological role, plays a central role in chromosome condensation, segregation and cell cycle progression. Functions as a homodimer, which is essential for chromosome partition. Involved in negative DNA supercoiling in vivo, and by this means organize and compact chromosomes. May achieve or facilitate chromosome segregation by condensation DNA from both sides of a centrally located replisome during cell division. This chain is Chromosome partition protein MukB, found in Erwinia tasmaniensis (strain DSM 17950 / CFBP 7177 / CIP 109463 / NCPPB 4357 / Et1/99).